Reading from the N-terminus, the 858-residue chain is Alanine--tRNA ligase (858 aa).

Residues His-550, His-554, Cys-652, and His-656 each coordinate Zn(2+).

This sequence belongs to the class-II aminoacyl-tRNA synthetase family. Zn(2+) serves as cofactor.

Its subcellular location is the cytoplasm. It catalyses the reaction tRNA(Ala) + L-alanine + ATP = L-alanyl-tRNA(Ala) + AMP + diphosphate. Catalyzes the attachment of alanine to tRNA(Ala) in a two-step reaction: alanine is first activated by ATP to form Ala-AMP and then transferred to the acceptor end of tRNA(Ala). Also edits incorrectly charged Ser-tRNA(Ala) and Gly-tRNA(Ala) via its editing domain. The polypeptide is Alanine--tRNA ligase (Pseudothermotoga lettingae (strain ATCC BAA-301 / DSM 14385 / NBRC 107922 / TMO) (Thermotoga lettingae)).